The primary structure comprises 370 residues: Thiamine-repressible mitochondrial transport protein THI74 (370 aa).

Over 1-10 the chain is Cytoplasmic; the sequence is MNRVGIDVDH. The chain crosses the membrane as a helical span at residues 11 to 31; it reads MIGVLLLAVVVVFWVGASCLT. At 32-42 the chain is on the mitochondrial intermembrane side; it reads NELLETNAYNK. Residues 43 to 63 form a helical membrane-spanning segment; sequence PFFLTYLNISSFALYLTPDLW. Residues 64–119 are Cytoplasmic-facing; it reads RIIQSRRKSLQERTERTLPIHTQESFSEFLPLLSSTPSTSSNLSSIADTKVKDTMR. Residues 120 to 140 traverse the membrane as a helical segment; the sequence is LSLLFCVLWFVANLAANAALS. Positions 129-190 constitute an EamA domain; sequence FVANLAANAA…SLFGIILIVM (62 aa). Residues 141–146 lie on the Mitochondrial intermembrane side of the membrane; the sequence is YTTVAS. A helical transmembrane segment spans residues 147-167; the sequence is STILSSTSSFFTLFLATSLGI. Topologically, residues 168–169 are cytoplasmic; sequence ET. Residues 170–190 traverse the membrane as a helical segment; that stretch reads FSTKKLLGLFVSLFGIILIVM. Residues 191–203 lie on the Mitochondrial intermembrane side of the membrane; the sequence is QSSKQQDSVSASS. Residues 204 to 224 traverse the membrane as a helical segment; it reads FLVGNTLALLGSLGYSVYTTL. The Cytoplasmic portion of the chain corresponds to 225 to 239; sequence LKYEISSKGLRLDIQ. A helical transmembrane segment spans residues 240 to 260; that stretch reads MFLGYVGIFTFLLFWPILIIL. Over 261–273 the chain is Mitochondrial intermembrane; it reads DITHMETFELPSN. A helical membrane pass occupies residues 274–294; the sequence is FHISFLVMLNCIIIFVSDYFW. At 295–303 the chain is on the cytoplasmic side; it reads CKALILTSP. The chain crosses the membrane as a helical span at residues 304-324; the sequence is LVVTVALTFTIPLAMFADFVW. Topologically, residues 325–326 are mitochondrial intermembrane; that stretch reads RE. Residues 327–347 form a helical membrane-spanning segment; the sequence is AFFTPWYIIGVIFIFVSFFLV. Residues 348 to 370 are Cytoplasmic-facing; that stretch reads NHRGESAVEKDCAAVEKGPILDA.

Its subcellular location is the mitochondrion membrane. In terms of biological role, may be involved in thiaminediphosphate transport across the mitochondrial membrane. The sequence is that of Thiamine-repressible mitochondrial transport protein THI74 (THI74) from Saccharomyces cerevisiae (strain ATCC 204508 / S288c) (Baker's yeast).